The primary structure comprises 34 residues: uncharacterized protein (34 aa).

This is an uncharacterized protein from Saccharomyces cerevisiae (strain ATCC 204508 / S288c) (Baker's yeast).